Consider the following 573-residue polypeptide: Probable D-xylulose kinase A (573 aa).

Substrate contacts are provided by His97, Arg168, Asp284, and Asn285. Residues Trp366, 471-472 (GG), and Asn475 contribute to the ATP site.

The protein belongs to the FGGY kinase family.

It is found in the cytoplasm. The catalysed reaction is D-xylulose + ATP = D-xylulose 5-phosphate + ADP + H(+). Highly specific D-xylulose kinase which participates in the catabolism of xylose. Xylose is a major component of hemicelluloses such as xylan. Most fungi utilize D-xylose via three enzymatic reactions, xylose reductase (XR), xylitol dehydrogenase (XDH), and xylulokinase, to form xylulose 5-phosphate, which enters pentose phosphate pathway. The sequence is that of Probable D-xylulose kinase A (xkiA) from Neosartorya fischeri (strain ATCC 1020 / DSM 3700 / CBS 544.65 / FGSC A1164 / JCM 1740 / NRRL 181 / WB 181) (Aspergillus fischerianus).